The sequence spans 465 residues: L-seryl-tRNA(Sec) selenium transferase (465 aa).

K294 is modified (N6-(pyridoxal phosphate)lysine).

It belongs to the SelA family. Pyridoxal 5'-phosphate is required as a cofactor.

The protein resides in the cytoplasm. It catalyses the reaction L-seryl-tRNA(Sec) + selenophosphate + H(+) = L-selenocysteinyl-tRNA(Sec) + phosphate. It functions in the pathway aminoacyl-tRNA biosynthesis; selenocysteinyl-tRNA(Sec) biosynthesis; selenocysteinyl-tRNA(Sec) from L-seryl-tRNA(Sec) (bacterial route): step 1/1. Its function is as follows. Converts seryl-tRNA(Sec) to selenocysteinyl-tRNA(Sec) required for selenoprotein biosynthesis. The sequence is that of L-seryl-tRNA(Sec) selenium transferase from Maridesulfovibrio salexigens (strain ATCC 14822 / DSM 2638 / NCIMB 8403 / VKM B-1763) (Desulfovibrio salexigens).